Here is a 69-residue protein sequence, read N- to C-terminus: U-Asilidin(12)-Dg3a (69 aa).

The N-terminal stretch at 1-19 (MRFLNIFLFFAAIIAFATA) is a signal peptide. Residues 20-33 (SQVFEEDEIDMEPR) constitute a propeptide that is removed on maturation. Intrachain disulfides connect Cys-36–Cys-59, Cys-45–Cys-65, and Cys-49–Cys-67.

Belongs to the asilidin-12 family. As to expression, expressed by the venom gland.

It localises to the secreted. Moderately increases Kv11.1/KCNH2/ERG1 currents and shifts the voltage-dependence of the channel activation to hyperpolarised potentials. In vivo, induces neurotoxic effects when injected into insects (tested on L.cuprina and A.domesticus). The chain is U-Asilidin(12)-Dg3a from Dolopus genitalis (Giant Australian assassin fly).